Here is a 962-residue protein sequence, read N- to C-terminus: Glycine dehydrogenase (decarboxylating) (962 aa).

Lys709 is subject to N6-(pyridoxal phosphate)lysine.

The protein belongs to the GcvP family. The glycine cleavage system is composed of four proteins: P, T, L and H. Pyridoxal 5'-phosphate serves as cofactor.

The catalysed reaction is N(6)-[(R)-lipoyl]-L-lysyl-[glycine-cleavage complex H protein] + glycine + H(+) = N(6)-[(R)-S(8)-aminomethyldihydrolipoyl]-L-lysyl-[glycine-cleavage complex H protein] + CO2. Its function is as follows. The glycine cleavage system catalyzes the degradation of glycine. The P protein binds the alpha-amino group of glycine through its pyridoxal phosphate cofactor; CO(2) is released and the remaining methylamine moiety is then transferred to the lipoamide cofactor of the H protein. In Shewanella loihica (strain ATCC BAA-1088 / PV-4), this protein is Glycine dehydrogenase (decarboxylating).